Reading from the N-terminus, the 106-residue chain is Large ribosomal subunit protein bL21 (106 aa).

Belongs to the bacterial ribosomal protein bL21 family. As to quaternary structure, part of the 50S ribosomal subunit. Contacts protein L20.

This protein binds to 23S rRNA in the presence of protein L20. This chain is Large ribosomal subunit protein bL21, found in Chlamydia abortus (strain DSM 27085 / S26/3) (Chlamydophila abortus).